The sequence spans 399 residues: DNA primase DnaG (399 aa).

Residues 182 to 268 form the Toprim domain; the sequence is DAIIVVEGRA…EVEDLTQKEI (87 aa). Residues Glu-188, Asp-230, and Asp-232 each coordinate Mg(2+).

Belongs to the archaeal DnaG primase family. In terms of assembly, forms a ternary complex with MCM helicase and DNA. Component of the archaeal exosome complex. The cofactor is Mg(2+).

The enzyme catalyses ssDNA + n NTP = ssDNA/pppN(pN)n-1 hybrid + (n-1) diphosphate.. Functionally, RNA polymerase that catalyzes the synthesis of short RNA molecules used as primers for DNA polymerase during DNA replication. Also part of the exosome, which is a complex involved in RNA degradation. Acts as a poly(A)-binding protein that enhances the interaction between heteromeric, adenine-rich transcripts and the exosome. This Archaeoglobus fulgidus (strain ATCC 49558 / DSM 4304 / JCM 9628 / NBRC 100126 / VC-16) protein is DNA primase DnaG.